The following is a 428-amino-acid chain: Glutamate-1-semialdehyde 2,1-aminomutase (428 aa).

An N6-(pyridoxal phosphate)lysine modification is found at K265.

The protein belongs to the class-III pyridoxal-phosphate-dependent aminotransferase family. HemL subfamily. As to quaternary structure, homodimer. Pyridoxal 5'-phosphate serves as cofactor.

Its subcellular location is the cytoplasm. It catalyses the reaction (S)-4-amino-5-oxopentanoate = 5-aminolevulinate. It functions in the pathway porphyrin-containing compound metabolism; protoporphyrin-IX biosynthesis; 5-aminolevulinate from L-glutamyl-tRNA(Glu): step 2/2. The protein is Glutamate-1-semialdehyde 2,1-aminomutase of Aeromonas salmonicida (strain A449).